The primary structure comprises 147 residues: SsrA-binding protein (147 aa).

Residues 119–147 (AKGKKQHDKRESEKQKEWERDKQRLMRPK) form a disordered region. Basic and acidic residues predominate over residues 126–147 (DKRESEKQKEWERDKQRLMRPK).

This sequence belongs to the SmpB family.

Its subcellular location is the cytoplasm. Required for rescue of stalled ribosomes mediated by trans-translation. Binds to transfer-messenger RNA (tmRNA), required for stable association of tmRNA with ribosomes. tmRNA and SmpB together mimic tRNA shape, replacing the anticodon stem-loop with SmpB. tmRNA is encoded by the ssrA gene; the 2 termini fold to resemble tRNA(Ala) and it encodes a 'tag peptide', a short internal open reading frame. During trans-translation Ala-aminoacylated tmRNA acts like a tRNA, entering the A-site of stalled ribosomes, displacing the stalled mRNA. The ribosome then switches to translate the ORF on the tmRNA; the nascent peptide is terminated with the 'tag peptide' encoded by the tmRNA and targeted for degradation. The ribosome is freed to recommence translation, which seems to be the essential function of trans-translation. In Nitrosospira multiformis (strain ATCC 25196 / NCIMB 11849 / C 71), this protein is SsrA-binding protein.